The chain runs to 473 residues: Isocitrate dehydrogenase [NADP] (473 aa).

Position 104 (threonine 104) interacts with NADP(+). The D-threo-isocitrate site is built by serine 113, asparagine 115, arginine 119, arginine 129, and arginine 153. Aspartate 362 lines the Mg(2+) pocket. NADP(+) contacts are provided by residues 394–400 (HGTAPKH), asparagine 407, tyrosine 446, and arginine 450.

Belongs to the isocitrate and isopropylmalate dehydrogenases family. Homodimer. Mg(2+) serves as cofactor. Mn(2+) is required as a cofactor.

It carries out the reaction D-threo-isocitrate + NADP(+) = 2-oxoglutarate + CO2 + NADPH. With respect to regulation, inhibited by either oxaloacetate or glyoxylate. Also inhibited by the adenine nucleotides AMP, ADP and ATP and by NADPH, which inhibits the activity by 28% when it is added to the assay mixture at 0.25 mM. Its function is as follows. Catalyzes the oxidative decarboxylation of isocitrate to 2-oxoglutarate and carbon dioxide with the concomitant reduction of NADP(+). This Nostoc sp. (strain PCC 7120 / SAG 25.82 / UTEX 2576) protein is Isocitrate dehydrogenase [NADP].